The following is a 232-amino-acid chain: Flagellar L-ring protein (232 aa).

Residues 1 to 21 form the signal peptide; it reads MQKNAAHTYAISSLLVLSLTG. C22 carries N-palmitoyl cysteine lipidation. C22 is lipidated: S-diacylglycerol cysteine.

The protein belongs to the FlgH family. As to quaternary structure, the basal body constitutes a major portion of the flagellar organelle and consists of four rings (L,P,S, and M) mounted on a central rod.

Its subcellular location is the cell outer membrane. It localises to the bacterial flagellum basal body. Functionally, assembles around the rod to form the L-ring and probably protects the motor/basal body from shearing forces during rotation. The chain is Flagellar L-ring protein from Shigella boydii serotype 4 (strain Sb227).